Reading from the N-terminus, the 285-residue chain is MPNTMQALHTRPLNENLITKSLTAADYVATLDAMLSRTLERISLKKEQGLRTPDELWIVDHNDVYTLGQAGKEEHILQRTNTPIIKTDRGGQVTWHGHGQLVMYWLFDLDSISWSVRNMVSHAEQAIEDVVNDCLKSTASTDTNHISARARRDAPGVYLYADMATETDSAPTSDEIEVDNTIMIGKIASLGFKIKHGFSYHGIAINLDCDLSAFNAINPCGYAGMQMLRLADFVNMNQATNIQPNNLPLTDDKKTLTYEQFTQQLIDNIAQRHAGDIPLRELAPK.

Residues 50–277 form the BPL/LPL catalytic domain; sequence LRTPDELWIV…NIAQRHAGDI (228 aa). Residues 89–96, 189–191, and 202–204 each bind substrate; these read RGGQVTWH, SLG, and GIA. Residue cysteine 220 is the Acyl-thioester intermediate of the active site.

This sequence belongs to the LipB family.

It is found in the cytoplasm. The catalysed reaction is octanoyl-[ACP] + L-lysyl-[protein] = N(6)-octanoyl-L-lysyl-[protein] + holo-[ACP] + H(+). Its pathway is protein modification; protein lipoylation via endogenous pathway; protein N(6)-(lipoyl)lysine from octanoyl-[acyl-carrier-protein]: step 1/2. Its function is as follows. Catalyzes the transfer of endogenously produced octanoic acid from octanoyl-acyl-carrier-protein onto the lipoyl domains of lipoate-dependent enzymes. Lipoyl-ACP can also act as a substrate although octanoyl-ACP is likely to be the physiological substrate. The sequence is that of Octanoyltransferase from Psychrobacter cryohalolentis (strain ATCC BAA-1226 / DSM 17306 / VKM B-2378 / K5).